A 306-amino-acid chain; its full sequence is UDP-N-acetylenolpyruvoylglucosamine reductase (306 aa).

One can recognise an FAD-binding PCMH-type domain in the interval 34 to 198 (VGGPADLLIT…LEVTFKLHNS (165 aa)). R177 is a catalytic residue. Residue S227 is the Proton donor of the active site. The active site involves E297.

It belongs to the MurB family. FAD serves as cofactor.

The protein localises to the cytoplasm. The catalysed reaction is UDP-N-acetyl-alpha-D-muramate + NADP(+) = UDP-N-acetyl-3-O-(1-carboxyvinyl)-alpha-D-glucosamine + NADPH + H(+). The protein operates within cell wall biogenesis; peptidoglycan biosynthesis. In terms of biological role, cell wall formation. This is UDP-N-acetylenolpyruvoylglucosamine reductase from Clostridium botulinum (strain 657 / Type Ba4).